A 1223-amino-acid polypeptide reads, in one-letter code: Kinesin-like protein costa (1223 aa).

Residues 4-394 (PIQVAVRICP…LQFAFKVQCV (391 aa)) enclose the Kinesin motor domain. Residues 13-90 (PYTEPSENRK…LPTDSNGNEN (78 aa)) are disordered. Residues 39 to 62 (AKAESFSDSEDNKNDASNRQRPEE) are compositionally biased toward basic and acidic residues. 178 to 185 (GQRGQGKT) provides a ligand contact to ATP. 3 disordered regions span residues 494–528 (RSQK…ESQR), 560–604 (KHPK…SIQP), and 625–646 (TAQP…ESSA). The segment covering 569–593 (QERDKESKLDAPPEKDKEKIEERKT) has biased composition (basic and acidic residues). 3 coiled-coil regions span residues 658 to 743 (AAAN…QGRE), 773 to 825 (ESGQ…GASG), and 982 to 1015 (NKVI…ERVL). The segment at 774–799 (SGQKLKKLQQSMAESRKQQEELEKKI) is disordered. Residues 787 to 799 (ESRKQQEELEKKI) show a composition bias toward basic and acidic residues. Residues 1162–1178 (TTTATATTTTTTTTTTT) show a composition bias toward low complexity. The interval 1162–1188 (TTTATATTTTTTTTTTTGGKGKERGLP) is disordered.

It belongs to the TRAFAC class myosin-kinesin ATPase superfamily. Kinesin family. KIF27 subfamily. In terms of assembly, homodimer (Potential). Binds microtubules. Interacts with ci, smo, sgg, CkIalpha and protein kinase A catalytic subunit.

The protein localises to the cytoplasm. Its subcellular location is the cytoskeleton. In terms of biological role, regulates cubitus interruptus (ci) processing by recruiting multiple kinases to promote its efficient phosphorylation. Scaffolds multiple kinases and ci into proximity to promote its hyperphosphorylation, which then targets it for SCFSlimb/proteasome-mediated processing to generate its repressor form. Hh signaling inhibits ci phosphorylation by interfering with the cos-ci-kinases complex formation. In Drosophila pseudoobscura pseudoobscura (Fruit fly), this protein is Kinesin-like protein costa (cos).